The primary structure comprises 276 residues: UPF0276 protein CV_3513 (276 aa).

The protein belongs to the UPF0276 family.

This Chromobacterium violaceum (strain ATCC 12472 / DSM 30191 / JCM 1249 / CCUG 213 / NBRC 12614 / NCIMB 9131 / NCTC 9757 / MK) protein is UPF0276 protein CV_3513.